Here is a 598-residue protein sequence, read N- to C-terminus: MATLCIGSAPIYQNACIHNFRLQRPRRFISKSMTKTMPDANPLDLRRRSGNYQPSSWDHSYLLSIENKYVNEKEVITRHVLKKKVKKMLEEVETKSRLEKLELIDDLQKLGVSYHFEQEINNILTNFHLENGKNIWKCDKEEDLHATALEFRLLRQHGFGVSEDIFDVIIDKIESNTFKSDNITSIITLYEASYLSTKSDTKLHKVIRPFATEQIRNFVDDESETYNIMLREMAIHALEIPYHWRMRRLETRWYIDAYEKKHDMNLFLAEFAKIDFNIVQTAHQEDVKYVSCWWKETGLGSQLHFVRDRIVENYFWTVGMIYEPQFGYIRRIVAIVAALITVIDDIYDIYGTPEELELFTAMVQNWDINRLDELPEYMKLCFLTLFNEINAMGCDVLKCKNIDVIPYFKKSWADLCKAYLVEAKWYKGGYKPSVEEYMQNAWISISAPTMLIHFYCAFSGQISVQILESLVQQQQDVVRCSATVLRLANDLATSPDELARGDVLKSVQCYMHETGVSEEEARTHVQQMISHTWDEMNYEARTAARSSSLLSRRFVETAMNLARMSQCMYQHGDGHGCPDKAKIVDRVQTLLVDPIPLD.

The transit peptide at 1–30 (MATLCIGSAPIYQNACIHNFRLQRPRRFIS) directs the protein to the chloroplast. Positions 307, 344, 348, 486, and 489 each coordinate (2E)-geranyl diphosphate. Asp-344 and Asp-348 together coordinate Mg(2+). Residues 344–348 (DDIYD) carry the DDXXD motif motif. 3 residues coordinate Mg(2+): Asn-489, Thr-493, and Glu-497.

It belongs to the terpene synthase family. Tpsb subfamily. The cofactor is Mg(2+). Mn(2+) serves as cofactor. As to expression, expressed exclusively in mature flowers, but not in inmmature buds.

It localises to the plastid. The protein localises to the chloroplast. The enzyme catalyses (2E)-geranyl diphosphate = beta-myrcene + diphosphate. The protein operates within secondary metabolite biosynthesis; terpenoid biosynthesis. Its function is as follows. Involved in monoterpene (C10) biosynthesis. The major products are alpha- and beta-pinene, sabinene, beta-myrcene, (E)-beta-ocimene and limonene. This chain is Beta-myrcene/(E)-beta-ocimene synthase 2, chloroplastic (TPS24), found in Arabidopsis thaliana (Mouse-ear cress).